We begin with the raw amino-acid sequence, 123 residues long: MTILLIRGDSYEKLKNALADVDRHAELTIIGKPKIIVPEAADEILSHILGEVKKPCKTACLAKIAEKAPKAIDRIRKIHPPAHIVVISERYGDIYYKLLDDFPKLPVLKGYYKSKKKDKKKKK.

This is an uncharacterized protein from Methanocaldococcus jannaschii (strain ATCC 43067 / DSM 2661 / JAL-1 / JCM 10045 / NBRC 100440) (Methanococcus jannaschii).